Reading from the N-terminus, the 417-residue chain is Acetate kinase (417 aa).

Asparagine 9 provides a ligand contact to Mg(2+). Lysine 16 provides a ligand contact to ATP. Substrate is bound at residue arginine 90. Catalysis depends on aspartate 147, which acts as the Proton donor/acceptor. ATP is bound by residues 207–211 (HIGNG), 282–284 (DLR), and 330–334 (GIGEN). Glutamate 384 provides a ligand contact to Mg(2+).

It belongs to the acetokinase family. As to quaternary structure, homodimer. The cofactor is Mg(2+). Requires Mn(2+) as cofactor.

The protein localises to the cytoplasm. It carries out the reaction acetate + ATP = acetyl phosphate + ADP. Its pathway is metabolic intermediate biosynthesis; acetyl-CoA biosynthesis; acetyl-CoA from acetate: step 1/2. Functionally, catalyzes the formation of acetyl phosphate from acetate and ATP. Can also catalyze the reverse reaction. The sequence is that of Acetate kinase from Staphylococcus epidermidis (strain ATCC 35984 / DSM 28319 / BCRC 17069 / CCUG 31568 / BM 3577 / RP62A).